Consider the following 1133-residue polypeptide: DNA-directed RNA polymerase III subunit RPC2 (1133 aa).

Position 186 (lysine 186) interacts with RNA. Arginine 195 is a binding site for DNA. Arginine 213 is an RNA binding site. Residue aspartate 432 coordinates DNA. RNA contacts are provided by glutamine 438 and glutamine 692. Aspartate 753 contributes to the Mg(2+) binding site. RNA contacts are provided by lysine 896, lysine 904, and lysine 1019. Residues arginine 1039, serine 1040, and arginine 1046 each coordinate DNA. Zn(2+) contacts are provided by cysteine 1080, cysteine 1083, cysteine 1092, and cysteine 1095. The C4-type zinc-finger motif lies at 1080 to 1095; it reads CGQCGLLGYSGWCHYC.

This sequence belongs to the RNA polymerase beta chain family. As to quaternary structure, component of the RNA polymerase III (Pol III) complex consisting of 17 subunits: a ten-subunit catalytic core composed of POLR3A/RPC1, POLR3B/RPC2, POLR1C/RPAC1, POLR1D/RPAC2, POLR3K/RPC10, POLR2E/RPABC1, POLR2F/RPABC2, POLR2H/RPABC3, POLR2K/RPABC4 and POLR2L/RPABC5; a mobile stalk composed of two subunits POLR3H/RPC8 and CRCP/RPC9, protruding from the core and functioning primarily in transcription initiation; and additional subunits homologous to general transcription factors of the RNA polymerase II machinery, POLR3C/RPC3-POLR3F/RPC6-POLR3G/RPC7 heterotrimer required for transcription initiation and POLR3D/RPC4-POLR3E/RPC5 heterodimer involved in both transcription initiation and termination. Requires Mg(2+) as cofactor.

The protein resides in the nucleus. It is found in the cytoplasm. Its subcellular location is the cytosol. The enzyme catalyses RNA(n) + a ribonucleoside 5'-triphosphate = RNA(n+1) + diphosphate. Functionally, catalytic core component of RNA polymerase III (Pol III), a DNA-dependent RNA polymerase which synthesizes small non-coding RNAs using the four ribonucleoside triphosphates as substrates. Synthesizes 5S rRNA, snRNAs, tRNAs and miRNAs from at least 500 distinct genomic loci. Pol III-mediated transcription cycle proceeds through transcription initiation, transcription elongation and transcription termination stages. During transcription initiation, Pol III is recruited to DNA promoters type I, II or III with the help of general transcription factors and other specific initiation factors. Once the polymerase has escaped from the promoter it enters the elongation phase during which RNA is actively polymerized, based on complementarity with the template DNA strand. Transcription termination involves the release of the RNA transcript and polymerase from the DNA. Forms Pol III active center together with the largest subunit POLR3A/RPC1. A single-stranded DNA template strand of the promoter is positioned within the central active site cleft of Pol III. Appends one nucleotide at a time to the 3' end of the nascent RNA, with POLR3A/RPC1 contributing a Mg(2+)-coordinating DxDGD motif, and POLR3B/RPC2 participating in the coordination of a second Mg(2+) ion and providing lysine residues believed to facilitate Watson-Crick base pairing between the incoming nucleotide and template base. Typically, Mg(2+) ions direct a 5' nucleoside triphosphate to form a phosphodiester bond with the 3' hydroxyl of the preceding nucleotide of the nascent RNA, with the elimination of pyrophosphate. Pol III plays a key role in sensing and limiting infection by intracellular bacteria and DNA viruses. Acts as a nuclear and cytosolic DNA sensor involved in innate immune response. Can sense non-self dsDNA that serves as template for transcription into dsRNA. The non-self RNA polymerase III transcripts, such as Epstein-Barr virus-encoded RNAs (EBERs) induce type I interferon and NF-kappa-B through the RIG-I pathway. In Homo sapiens (Human), this protein is DNA-directed RNA polymerase III subunit RPC2.